A 268-amino-acid chain; its full sequence is Microtubule-associated protein RP/EB family member 1 (268 aa).

Ala-2 is subject to N-acetylalanine. Residues 14–116 (NLSRHDMLAW…FVQWFKKFFD (103 aa)) form the Calponin-homology (CH) domain. An N6-crotonyllysine modification is found at Lys-66. Tyr-124 carries the post-translational modification Phosphotyrosine. An interaction with MTUS2/TIP150 region spans residues 124-268 (YDPVAARQGQ…GGPQEEQEEY (145 aa)). Residues 146–191 (LSKPKKPLGSGSAAPQRPIATQRTTAAPKAGPGMVRKNPGMGNGDD) are disordered. Ser-155 is modified (phosphoserine). One can recognise an EB1 C-terminal domain in the interval 185 to 255 (GMGNGDDEAA…LYATDEGFVI (71 aa)). The tract at residues 206–211 (TVEDLE) is interaction with APC. Residues 208–268 (EDLEKERDFY…GGPQEEQEEY (61 aa)) are DCTN1-binding. At Lys-220 the chain carries N6-acetyllysine. Residues 220 to 242 (KLRNIELICQENEGENDPVLQRI) form an APC-binding region. Residues 232 to 255 (EGENDPVLQRIVDILYATDEGFVI) form an interaction with SKA1 region.

The protein belongs to the MAPRE family. Homodimer. Heterodimer with MAPRE3. Interacts with DCTN1, DCTN2, TERF1 and dynein intermediate chain. Interaction with DIAPH1 and DIAPH2. Interacts (via C-terminal residues 206-211) with APC (via C-terminal residues 2674-2845); the interaction inhibits association with and bundling of F-actin. Interacts with CLASP2, DST, KIF2C and STIM1; probably required for their targeting to the growing microtubule plus ends. Interacts with MTUS2; interaction is direct and probably targets MTUS2 to microtubules. Interacts (via C-terminus) with SKA1 (via SXIP motif); the interaction is direct and stabilizes the kinetochore-microtubule attachment of the SKA1 complex. Interacts with APC2. Interacts with CLASP1. Interacts with CDK5RAP2. According to another report, MAPRE1 does not interact with CDK5RAP2. Interacts with MACF1. Interacts with RABL2/RABL2A; binds preferentially to GTP-bound RABL2. Interacts with KCNAB2. Interacts (via C-terminus) with CLIP1. Interacts with SLAIN2 and SLAIN1. Interacts with KIF18B; this interaction is required for efficient accumulation of KIF18B at microtubule plus ends. Interacts with MISP. Interacts with KNSTRN. Interacts with NCKAP5L. Interacts with AKAP9. Interacts with PDE4DIP; this interaction, which is PDE4DIP isoform-specific, is required for its recruitment to the Golgi apparatus. Interacts with CAMSAP2. May form a pericentrosomal complex with AKAP9, CDK5RAP2 and PDE4DIP isoform 2/MMG8/SMYLE; within this complex, MAPRE1 binding to CDK5RAP2 may be mediated by PDE4DIP. Contrary to other mammalian species, does not interact with CDK5RAP2, possibly due to the lack of conservation of the MAPRE1-binding motif in rat CDK5RAP2. Interacts with AKNA. Interacts with GAS2L1, GAS2L2, and GAS2L3. Interacts with RARRES1 and AGBL2. Post-translationally, acetylation at Lys-220 by KAT2B/PCAF promotes dynamic kinetochore-microtubule interactions in early mitosis. Crotonylated by KAT5 during mitosis, promoting astral microtubule plasticity and dynamic connection between astral microtubules and the cortex during mitotic chromosome segregation, thereby ensuring accurate spindle positioning in mitosis. Decrotonylated by HDAC3.

Its subcellular location is the cytoplasm. The protein localises to the cytoskeleton. It localises to the microtubule organizing center. The protein resides in the centrosome. It is found in the golgi apparatus. Its subcellular location is the spindle. The protein localises to the spindle pole. Its function is as follows. Plus-end tracking protein (+TIP) that binds to the plus-end of microtubules and regulates the dynamics of the microtubule cytoskeleton. Recruits other +TIP proteins to microtubules by binding to a conserved Ser-X-Leu-Pro (SXLP) motif in their polypeptide chains. Promotes cytoplasmic microtubule nucleation and elongation. Involved in mitotic spindle positioning by stabilizing microtubules and promoting dynamic connection between astral microtubules and the cortex during mitotic chromosome segregation. Assists chromosome alignment in metaphase by recruiting the SKA complex to the spindle and stabilizing its interactions with microtubule bundles (K-fibers). Also acts as a regulator of minus-end microtubule organization: interacts with the complex formed by AKAP9 and PDE4DIP, leading to recruit CAMSAP2 to the Golgi apparatus, thereby tethering non-centrosomal minus-end microtubules to the Golgi, an important step for polarized cell movement. Promotes elongation of CAMSAP2-decorated microtubule stretches on the minus-end of microtubules. Acts as a regulator of autophagosome transport via interaction with CAMSAP2. Functions downstream of Rho GTPases and DIAPH1 in stable microtubule formation. May play a role in cell migration. The chain is Microtubule-associated protein RP/EB family member 1 (Mapre1) from Rattus norvegicus (Rat).